Consider the following 185-residue polypeptide: Orotate phosphoribosyltransferase (185 aa).

5-phospho-alpha-D-ribose 1-diphosphate-binding positions include arginine 98, lysine 99, lysine 102, histidine 104, and 128 to 136 (EDVTTTGGS). 2 residues coordinate orotate: threonine 132 and arginine 160.

Belongs to the purine/pyrimidine phosphoribosyltransferase family. PyrE subfamily. In terms of assembly, homodimer. It depends on Mg(2+) as a cofactor.

It carries out the reaction orotidine 5'-phosphate + diphosphate = orotate + 5-phospho-alpha-D-ribose 1-diphosphate. Its pathway is pyrimidine metabolism; UMP biosynthesis via de novo pathway; UMP from orotate: step 1/2. Catalyzes the transfer of a ribosyl phosphate group from 5-phosphoribose 1-diphosphate to orotate, leading to the formation of orotidine monophosphate (OMP). This is Orotate phosphoribosyltransferase from Bradyrhizobium sp. (strain BTAi1 / ATCC BAA-1182).